The chain runs to 176 residues: Crossover junction endodeoxyribonuclease RuvC (176 aa).

Catalysis depends on residues Asp7, Glu68, and Asp141. Mg(2+)-binding residues include Asp7, Glu68, and Asp141.

The protein belongs to the RuvC family. As to quaternary structure, homodimer which binds Holliday junction (HJ) DNA. The HJ becomes 2-fold symmetrical on binding to RuvC with unstacked arms; it has a different conformation from HJ DNA in complex with RuvA. In the full resolvosome a probable DNA-RuvA(4)-RuvB(12)-RuvC(2) complex forms which resolves the HJ. Requires Mg(2+) as cofactor.

Its subcellular location is the cytoplasm. The catalysed reaction is Endonucleolytic cleavage at a junction such as a reciprocal single-stranded crossover between two homologous DNA duplexes (Holliday junction).. The RuvA-RuvB-RuvC complex processes Holliday junction (HJ) DNA during genetic recombination and DNA repair. Endonuclease that resolves HJ intermediates. Cleaves cruciform DNA by making single-stranded nicks across the HJ at symmetrical positions within the homologous arms, yielding a 5'-phosphate and a 3'-hydroxyl group; requires a central core of homology in the junction. The consensus cleavage sequence is 5'-(A/T)TT(C/G)-3'. Cleavage occurs on the 3'-side of the TT dinucleotide at the point of strand exchange. HJ branch migration catalyzed by RuvA-RuvB allows RuvC to scan DNA until it finds its consensus sequence, where it cleaves and resolves the cruciform DNA. This is Crossover junction endodeoxyribonuclease RuvC from Streptomyces avermitilis (strain ATCC 31267 / DSM 46492 / JCM 5070 / NBRC 14893 / NCIMB 12804 / NRRL 8165 / MA-4680).